The following is a 277-amino-acid chain: MELIEKHVSFGGWQNMYRHYSQSLKCEMNVGVYLPPKAANEKLPVLYWLSGLTCNEQNFITKSGMQRYAAEHNIIVVAPDTSPRGSHVADADRYDLGQGAGFYLNATQAPWNEHYKMYDYIRNELPDLVMHHFPATAKKSISGHSMGGLGALVLALRNPDEYVSVSAFSPIVSPSQVPWGQQAFAAYLAENKDAWLDYDPVSLISQGQRVAEIMVDQGLSDDFYAEQLRTPNLEKICQEMNIKTLIRYHEGYDHSYYFVSSFIGEHIAYHANKLNMR.

Residues S145, D221, and H254 each act as charge relay system in the active site.

It belongs to the esterase D family.

It carries out the reaction S-formylglutathione + H2O = formate + glutathione + H(+). Serine hydrolase involved in the detoxification of formaldehyde. Hydrolyzes S-formylglutathione to glutathione and formate. This chain is S-formylglutathione hydrolase FrmB (frmB), found in Escherichia coli (strain K12 / DH10B).